Reading from the N-terminus, the 343-residue chain is Labda-7,13(16),14-triene synthase (343 aa).

Residues Asp114 and Glu119 each contribute to the Mg(2+) site. The DDXXXE motif motif lies at 114–119 (DDVHVE). Arg206 contributes to the substrate binding site. Residues Asn252, Ser256, and Glu260 each contribute to the Mg(2+) site. The NXXXSXXXE motif signature appears at 252–260 (NDLYSFAYE).

This sequence belongs to the terpene synthase family. Requires Mg(2+) as cofactor.

The enzyme catalyses (13E)-labda-7,13-dien-15-yl diphosphate = labda-7,13(16),14-triene + diphosphate. Its function is as follows. Involved in the biosynthesis of the labdane-type bicyclic diterpene labda-7,13(16),14-triene. Catalyzes the conversion of labda-7,13(E)-dienyl diphosphate to yield labda-7,13(16),14-triene. This is Labda-7,13(16),14-triene synthase from Streptomyces clavuligerus.